The chain runs to 334 residues: Nucleoid-associated protein YPTS_1390 (334 aa).

This sequence belongs to the YejK family.

The protein resides in the cytoplasm. Its subcellular location is the nucleoid. The polypeptide is Nucleoid-associated protein YPTS_1390 (Yersinia pseudotuberculosis serotype IB (strain PB1/+)).